Here is a 201-residue protein sequence, read N- to C-terminus: Phosphatidylglycerophosphatase and protein-tyrosine phosphatase 1 (201 aa).

The transit peptide at Met1–Gly27 directs the protein to the mitochondrion. Residues Trp37–Ala188 form the Tyrosine-protein phosphatase domain. The active-site Phosphocysteine intermediate is the Cys132.

It belongs to the protein-tyrosine phosphatase family. Non-receptor class dual specificity subfamily. As to quaternary structure, interacts with STYXL1; the interaction inhibits PTPMT1 catalytic activity.

It is found in the mitochondrion inner membrane. The enzyme catalyses a 1,2-diacyl-sn-glycero-3-phospho-(1'-sn-glycero-3'-phosphate) + H2O = a 1,2-diacyl-sn-glycero-3-phospho-(1'-sn-glycerol) + phosphate. It carries out the reaction O-phospho-L-tyrosyl-[protein] + H2O = L-tyrosyl-[protein] + phosphate. The catalysed reaction is O-phospho-L-seryl-[protein] + H2O = L-seryl-[protein] + phosphate. It catalyses the reaction O-phospho-L-threonyl-[protein] + H2O = L-threonyl-[protein] + phosphate. The enzyme catalyses 1,2-di-(9Z-octadecenoyl)-sn-glycero-3-phospho-(1'-sn-glycerol-3'-phosphate) + H2O = 1,2-di-(9Z-octadecenoyl)-sn-glycero-3-phospho-(1'-sn-glycerol) + phosphate. It carries out the reaction 1,2-dioctanoyl-sn-glycero-3-phospho-(1D-myo-inositol-5-phosphate) + H2O = 1,2-dioctanoyl-sn-glycero-3-phospho-(1D-myo-inositol) + phosphate. The catalysed reaction is a 1-acyl-2-hexanoyl-sn-glycero-3-phospho-(1D-myo-inositol-5-phosphate) + H2O = a 1-acyl-2-hexanoyl-sn-glycero-3-phospho-(1D-myo-inositol) + phosphate. It catalyses the reaction 1,2-dibutyryl-sn-glycero-3-phospho-(1D-myo-inositol-5-phosphate) + H2O = 1,2-dibutyryl-sn-glycero-3-phospho-(1D-myo-inositol) + phosphate. The protein operates within phospholipid metabolism; phosphatidylglycerol biosynthesis; phosphatidylglycerol from CDP-diacylglycerol: step 2/2. Functionally, lipid phosphatase which dephosphorylates phosphatidylglycerophosphate (PGP) to phosphatidylglycerol (PG). PGP is an essential intermediate in the biosynthetic pathway of cardiolipin, a mitochondrial-specific phospholipid regulating the membrane integrity and activities of the organelle. Has also been shown to display phosphatase activity toward phosphoprotein substrates, specifically mediates dephosphorylation of mitochondrial proteins, thereby playing an essential role in ATP production. Has probably a preference for proteins phosphorylated on Ser and/or Thr residues compared to proteins phosphorylated on Tyr residues. Probably involved in regulation of insulin secretion in pancreatic beta cells. May prevent intrinsic apoptosis, probably by regulating mitochondrial membrane integrity. In Homo sapiens (Human), this protein is Phosphatidylglycerophosphatase and protein-tyrosine phosphatase 1.